Consider the following 441-residue polypeptide: Xaa-Pro dipeptidase (441 aa).

The Mn(2+) site is built by Asp-244, Asp-255, His-336, Glu-381, and Glu-420.

It belongs to the peptidase M24B family. Bacterial-type prolidase subfamily. It depends on Mn(2+) as a cofactor.

The enzyme catalyses Xaa-L-Pro dipeptide + H2O = an L-alpha-amino acid + L-proline. Splits dipeptides with a prolyl residue in the C-terminal position. This chain is Xaa-Pro dipeptidase, found in Xanthomonas campestris pv. campestris (strain B100).